Consider the following 146-residue polypeptide: MKERYGTVYKGSQRLIDEESGEVIEVDKLYRKQTSGNFVKAYIVQLISMLDMIGGKKLKIVNYILDNVHLSNNTMIATTREIAKATGTSLQTVITTLKILEEGNIIKRKTGVLMLNPELLMRGDDQKQKYLLLEFGNFEQEANEID.

This is Replication and maintenance protein (repL) from Bacillus subtilis.